A 551-amino-acid chain; its full sequence is Structure-specific endonuclease subunit MUS81 (551 aa).

Disordered stretches follow at residues 85-131 (LASG…AGYW) and 231-255 (PEEH…EVGV). Ser-95 bears the Phosphoserine mark. Residues 110–131 (VQGSSMPVPTQPQAGSTNAGYW) show a composition bias toward polar residues. The interval 124–243 (GSTNAGYWPA…HHEESPVPEA (120 aa)) is interaction with BLM. A winged helix domain (WHD); critical for endonuclease activity region spans residues 131–230 (WPAQNSGARE…GLSTLNTAFQ (100 aa)). An ERCC4 domain is found at 270–372 (LLCVDIGETR…HRIYLVEEHG (103 aa)). Residues Asp-274, Glu-277, and Asp-307 contribute to the active site. Residues Asp-274, Glu-277, Asp-307, Glu-333, and Arg-334 each contribute to the Mg(2+) site. Residues 471 to 545 (VREVFARQLM…LSRTLYQLYC (75 aa)) are helix-hairpin-helix (2HhH); involved in DNA recognition and bending.

Belongs to the XPF family. Part of the heterodimeric DNA structure-specific endonuclease complex MUS81-EME1. Part of the heterodimeric DNA structure-specific endonuclease complex MUS81-EME2. Interacts with BLM; may stimulate the endonuclease activity of MUS81. Interacts with SLX4/BTBD12; this interaction is direct and links the MUS81-EME1 complex to SLX4, which may coordinate the action of the structure-specific endonuclease during DNA repair. Interacts with DCLRE1B/Apollo. Interacts with RECQL5; this interaction stimulates mitotic DNA synthesis. Interacts with CHEK2. Mg(2+) is required as a cofactor.

It is found in the nucleus. Its subcellular location is the nucleolus. Catalytic subunit of two functionally distinct, structure-specific, heterodimeric DNA endonucleases MUS81-EME1 and MUS81-EME2 that are involved in the maintenance of genome stability. Both endonucleases have essentially the same substrate specificity though MUS81-EME2 is more active than its MUS81-EME1 counterpart. Both cleave 3'-flaps and nicked Holliday junctions, and exhibit limited endonuclease activity with 5' flaps and nicked double-stranded DNAs. MUS81-EME2 which is active during the replication of DNA is more specifically involved in replication fork processing. Replication forks frequently encounter obstacles to their passage, including DNA base lesions, DNA interstrand cross-links, difficult-to-replicate sequences, transcription bubbles, or tightly bound proteins. One mechanism for the restart of a stalled replication fork involves nucleolytic cleavage mediated by the MUS81-EME2 endonuclease. By acting upon the stalled fork, MUS81-EME2 generates a DNA double-strand break (DSB) that can be repaired by homologous recombination, leading to the restoration of an active fork. MUS81-EME2 could also function in telomere maintenance. MUS81-EME1, on the other hand, is active later in the cell cycle and functions in the resolution of mitotic recombination intermediates including the Holliday junctions, the four-way DNA intermediates that form during homologous recombination. The chain is Structure-specific endonuclease subunit MUS81 from Rattus norvegicus (Rat).